A 471-amino-acid polypeptide reads, in one-letter code: Probable ribonuclease FAU-1 (471 aa).

Belongs to the FAU-1 family.

Its function is as follows. Probable RNase involved in rRNA stability through maturation and/or degradation of precursor rRNAs. Binds to RNA in loop regions with AU-rich sequences. This Aeropyrum pernix (strain ATCC 700893 / DSM 11879 / JCM 9820 / NBRC 100138 / K1) protein is Probable ribonuclease FAU-1.